Here is a 64-residue protein sequence, read N- to C-terminus: MAATAVRPITGMLRRGLILDIGIALGVGFVMANGYWYGYHMPRTNARDNYYKKLEEERAARMGA.

Residues methionine 1–arginine 15 lie on the Mitochondrial matrix side of the membrane. A helical membrane pass occupies residues glycine 16–tryptophan 36. Residues tyrosine 37–alanine 64 are Mitochondrial intermembrane-facing.

Belongs to the fungal cytochrome c oxidase subunit 7a family. As to quaternary structure, component of the cytochrome c oxidase (complex IV, CIV), a multisubunit enzyme composed of 11 subunits. The complex is composed of a catalytic core of 3 subunits Cox1, Cox2 and Cox3, encoded in the mitochondrial DNA, and 8 supernumerary subunits Cox4, Cox5a/Cox5, Cox6, Cox7, Cox8, Cox7a/Cox9, Cox6b/Cox12 and Cox6a/Cox13, which are encoded in the nuclear genome. The complex exists as a monomer or a dimer and forms respiratory supercomplexes (SCs) in the inner mitochondrial membrane with NADH-ubiquinone oxidoreductase (complex I, CI) and ubiquinol-cytochrome c oxidoreductase (cytochrome b-c1 complex, complex III, CIII), resulting in various different assemblies (supercomplexes I(1)IV(1), I(1)III(3)IV(2), III(2)IV(1) and III(2)IV(2) as well as larger supercomplexes of compositions like I(1)III(2)IV(5-6)).

The protein localises to the mitochondrion inner membrane. Its pathway is energy metabolism; oxidative phosphorylation. Functionally, component of the cytochrome c oxidase, the last enzyme in the mitochondrial electron transport chain which drives oxidative phosphorylation. The respiratory chain contains 3 multisubunit complexes succinate dehydrogenase (complex II, CII), ubiquinol-cytochrome c oxidoreductase (cytochrome b-c1 complex, complex III, CIII) and cytochrome c oxidase (complex IV, CIV), that cooperate to transfer electrons derived from NADH and succinate to molecular oxygen, creating an electrochemical gradient over the inner membrane that drives transmembrane transport and the ATP synthase. Cytochrome c oxidase is the component of the respiratory chain that catalyzes the reduction of oxygen to water. Electrons originating from reduced cytochrome c in the intermembrane space (IMS) are transferred via the dinuclear copper A center (CU(A)) of Cox2 and heme A of Cox1 to the active site in Cox1, a binuclear center (BNC) formed by heme A3 and copper B (CU(B)). The BNC reduces molecular oxygen to 2 water molecules using 4 electrons from cytochrome c in the IMS and 4 protons from the mitochondrial matrix. The sequence is that of Cytochrome c oxidase subunit 9, mitochondrial (cox-17) from Neurospora crassa (strain ATCC 24698 / 74-OR23-1A / CBS 708.71 / DSM 1257 / FGSC 987).